Consider the following 98-residue polypeptide: Co-chaperonin GroES 5 (98 aa).

The protein belongs to the GroES chaperonin family. Heptamer of 7 subunits arranged in a ring. Interacts with the chaperonin GroEL.

The protein localises to the cytoplasm. In terms of biological role, together with the chaperonin GroEL, plays an essential role in assisting protein folding. The GroEL-GroES system forms a nano-cage that allows encapsulation of the non-native substrate proteins and provides a physical environment optimized to promote and accelerate protein folding. GroES binds to the apical surface of the GroEL ring, thereby capping the opening of the GroEL channel. In Mesorhizobium japonicum (strain LMG 29417 / CECT 9101 / MAFF 303099) (Mesorhizobium loti (strain MAFF 303099)), this protein is Co-chaperonin GroES 5.